The primary structure comprises 119 residues: Large ribosomal subunit protein uL14 (119 aa).

It belongs to the universal ribosomal protein uL14 family. As to quaternary structure, part of the 50S ribosomal subunit. Forms a cluster with proteins L3 and L19. In the 70S ribosome, L14 and L19 interact and together make contacts with the 16S rRNA in bridges B5 and B8.

Functionally, binds to 23S rRNA. Forms part of two intersubunit bridges in the 70S ribosome. The chain is Large ribosomal subunit protein uL14 from Wolbachia pipientis subsp. Culex pipiens (strain wPip).